The chain runs to 213 residues: MAKMTKIEIQKRNKERVNLFLDGEYAFSISAELVYKESLKVNSEINPEKLRTLAESENFMRCKESALRIIEKTYKTEKEVRDKLKLKEYDESSIDKAIEFLKKYNFINDGNYTKIFIKDKLRSMGSQKIKYTLLRKGICKEIIDEELLNLDKENEKDVAFDIAQKKYNLIKNKETDTYKISGKLYRYLISKGYNTEVTSQVIKKVMAVDVDDF.

This sequence belongs to the RecX family.

It is found in the cytoplasm. Modulates RecA activity. The sequence is that of Regulatory protein RecX from Clostridium beijerinckii (strain ATCC 51743 / NCIMB 8052) (Clostridium acetobutylicum).